A 365-amino-acid polypeptide reads, in one-letter code: Chorismate synthase (365 aa).

Arg-47 contacts NADP(+). FMN is bound by residues Arg-124 to Ser-126, Gly-287, Lys-302 to Thr-306, and Arg-328.

Belongs to the chorismate synthase family. As to quaternary structure, homotetramer. It depends on FMNH2 as a cofactor.

It carries out the reaction 5-O-(1-carboxyvinyl)-3-phosphoshikimate = chorismate + phosphate. Its pathway is metabolic intermediate biosynthesis; chorismate biosynthesis; chorismate from D-erythrose 4-phosphate and phosphoenolpyruvate: step 7/7. Functionally, catalyzes the anti-1,4-elimination of the C-3 phosphate and the C-6 proR hydrogen from 5-enolpyruvylshikimate-3-phosphate (EPSP) to yield chorismate, which is the branch point compound that serves as the starting substrate for the three terminal pathways of aromatic amino acid biosynthesis. This reaction introduces a second double bond into the aromatic ring system. The polypeptide is Chorismate synthase (Prochlorococcus marinus (strain AS9601)).